A 293-amino-acid chain; its full sequence is Acidic endochitinase (293 aa).

The N-terminal stretch at 1 to 22 (MEKCFNIIPSLLLISLLIKSSN) is a signal peptide. Residues 24 to 293 (AGIAVYWGQN…GYSNAIKGSV (270 aa)) enclose the GH18 domain. 2 disulfides stabilise this stretch: Cys43/Cys90 and Cys73/Cys80. The active-site Proton donor is Glu150. Cys179 and Cys208 form a disulfide bridge.

The protein belongs to the glycosyl hydrolase 18 family. Chitinase class II subfamily.

It is found in the secreted. The protein localises to the extracellular space. The catalysed reaction is Random endo-hydrolysis of N-acetyl-beta-D-glucosaminide (1-&gt;4)-beta-linkages in chitin and chitodextrins.. This protein functions as a defense against chitin containing fungal pathogens. This chain is Acidic endochitinase, found in Cicer arietinum (Chickpea).